The following is a 647-amino-acid chain: Glutamyl-tRNA(Gln) amidotransferase subunit B, mitochondrial (647 aa).

Residues 87–106 (QAKALKKSGHKKKKSSDNQT) are disordered. Basic residues predominate over residues 90 to 100 (ALKKSGHKKKK).

It belongs to the GatB/GatE family. GatB subfamily. Subunit of the heterotrimeric GatCAB amidotransferase (AdT) complex, composed of A, B and C subunits.

The protein resides in the mitochondrion. The catalysed reaction is L-glutamyl-tRNA(Gln) + L-glutamine + ATP + H2O = L-glutaminyl-tRNA(Gln) + L-glutamate + ADP + phosphate + H(+). Allows the formation of correctly charged Gln-tRNA(Gln) through the transamidation of misacylated Glu-tRNA(Gln) in the mitochondria. The reaction takes place in the presence of glutamine and ATP through an activated gamma-phospho-Glu-tRNA(Gln). This chain is Glutamyl-tRNA(Gln) amidotransferase subunit B, mitochondrial, found in Neurospora crassa (strain ATCC 24698 / 74-OR23-1A / CBS 708.71 / DSM 1257 / FGSC 987).